Reading from the N-terminus, the 299-residue chain is Protein phosphatase 1 regulatory subunit 3D (299 aa).

The segment at 1–22 (MSRGPSSAVLPSALGSRKLGPR) is disordered. Residues Ser23, Ser25, and Ser28 each carry the phosphoserine modification. Residues 37-94 (EPRACRPPGSPGRAPPPTPAPSGCDPRLRPIILRRARSLPSSPERRQKAAGAPGAACR) form a disordered region. Over residues 44 to 56 (PGSPGRAPPPTPA) the composition is skewed to pro residues. Positions 57–67 (PSGCDPRLRPI) are enriched in low complexity. Position 74 is a phosphoserine (Ser74). Residues 85 to 94 (AAGAPGAACR) show a composition bias toward low complexity. Positions 101–104 (LRVR) match the PP1-binding motif motif. Ser133 is modified (phosphoserine). The CBM21 domain occupies 169–278 (GERLQRQLVC…NNDHRDYSLT (110 aa)).

Interacts with PPP1CC catalytic subunit of PP1, and associates with glycogen. Interacts with EPM2A; in the presence of NHLC1/malin the interaction leads to PPP1R3D ubiquitination and autophagic degradation. Expressed in all tissues tested. High expression in skeletal muscle and heart.

In terms of biological role, seems to act as a glycogen-targeting subunit for PP1. PP1 is essential for cell division, and participates in the regulation of glycogen metabolism, muscle contractility and protein synthesis. The protein is Protein phosphatase 1 regulatory subunit 3D (PPP1R3D) of Homo sapiens (Human).